The sequence spans 119 residues: Small ribosomal subunit protein bS16 (119 aa).

Positions 81–119 (GLAKRPARNNPKKAEPGQKAKERAAARAEKAGAGDDAAA) are disordered. The span at 92-113 (KKAEPGQKAKERAAARAEKAGA) shows a compositional bias: basic and acidic residues.

Belongs to the bacterial ribosomal protein bS16 family.

The chain is Small ribosomal subunit protein bS16 from Methylobacterium sp. (strain 4-46).